The following is a 499-amino-acid chain: Heparin cofactor 2 (499 aa).

A signal peptide spans 1-19 (MKHSLNALLIFLIITSAWG). The residue at position 37 (Ser37) is a Phosphoserine; by FAM20C. Asn49 is a glycosylation site (N-linked (GlcNAc...) (complex) asparagine). The interval 68–79 (DWIPEGEEDDDY) is chemotactic activity. A run of 2 repeats spans residues 73-83 (GEEDDDYLDLE) and 87-97 (SEDDDYIDIVD). Residues 73–97 (GEEDDDYLDLEKIFSEDDDYIDIVD) are 2 X 11 AA approximate repeats, Asp/Glu-rich (acidic) (hirudin-like). Residues Tyr79 and Tyr92 each carry the sulfotyrosine modification. N-linked (GlcNAc...) asparagine glycosylation is present at Asn188. Residues 192–212 (KYEITTIHNLFRKLTHRLFRR) form a glycosaminoglycan-binding site region. Residue Asn387 is glycosylated (N-linked (GlcNAc...) asparagine).

This sequence belongs to the serpin family. Post-translationally, phosphorylated by FAM20C in the extracellular medium. As to expression, expressed predominantly in liver. Also present in plasma. Expressed in plasma (at protein level). Expressed in liver.

In terms of biological role, thrombin inhibitor activated by the glycosaminoglycans, heparin or dermatan sulfate. In the presence of the latter, HC-II becomes the predominant thrombin inhibitor in place of antithrombin III (AT-III). Also inhibits chymotrypsin, but in a glycosaminoglycan-independent manner. Its function is as follows. Peptides at the N-terminal of HC-II have chemotactic activity for both monocytes and neutrophils. Shows negligible inhibition, in vitro, of thrombin and tPA and no inhibition of factor Xa, in vitro. In Homo sapiens (Human), this protein is Heparin cofactor 2 (SERPIND1).